Reading from the N-terminus, the 323-residue chain is tRNA dimethylallyltransferase (323 aa).

Residue Gly-15 to Thr-22 coordinates ATP. Thr-17–Thr-22 is a binding site for substrate. Interaction with substrate tRNA regions lie at residues Asp-40–Gln-43 and Gln-164–Arg-168.

It belongs to the IPP transferase family. As to quaternary structure, monomer. Mg(2+) is required as a cofactor.

The enzyme catalyses adenosine(37) in tRNA + dimethylallyl diphosphate = N(6)-dimethylallyladenosine(37) in tRNA + diphosphate. Its function is as follows. Catalyzes the transfer of a dimethylallyl group onto the adenine at position 37 in tRNAs that read codons beginning with uridine, leading to the formation of N6-(dimethylallyl)adenosine (i(6)A). The sequence is that of tRNA dimethylallyltransferase from Chloroherpeton thalassium (strain ATCC 35110 / GB-78).